The sequence spans 290 residues: 4-diphosphocytidyl-2-C-methyl-D-erythritol kinase (290 aa).

Lys-13 is an active-site residue. Residue 93 to 103 (PVQAGLGGGSA) participates in ATP binding. Residue Asp-135 is part of the active site.

This sequence belongs to the GHMP kinase family. IspE subfamily.

It catalyses the reaction 4-CDP-2-C-methyl-D-erythritol + ATP = 4-CDP-2-C-methyl-D-erythritol 2-phosphate + ADP + H(+). Its pathway is isoprenoid biosynthesis; isopentenyl diphosphate biosynthesis via DXP pathway; isopentenyl diphosphate from 1-deoxy-D-xylulose 5-phosphate: step 3/6. Catalyzes the phosphorylation of the position 2 hydroxy group of 4-diphosphocytidyl-2C-methyl-D-erythritol. In Desulfitobacterium hafniense (strain Y51), this protein is 4-diphosphocytidyl-2-C-methyl-D-erythritol kinase.